Here is a 226-residue protein sequence, read N- to C-terminus: Leucyl/phenylalanyl-tRNA--protein transferase (226 aa).

This sequence belongs to the L/F-transferase family.

It localises to the cytoplasm. The enzyme catalyses N-terminal L-lysyl-[protein] + L-leucyl-tRNA(Leu) = N-terminal L-leucyl-L-lysyl-[protein] + tRNA(Leu) + H(+). It carries out the reaction N-terminal L-arginyl-[protein] + L-leucyl-tRNA(Leu) = N-terminal L-leucyl-L-arginyl-[protein] + tRNA(Leu) + H(+). The catalysed reaction is L-phenylalanyl-tRNA(Phe) + an N-terminal L-alpha-aminoacyl-[protein] = an N-terminal L-phenylalanyl-L-alpha-aminoacyl-[protein] + tRNA(Phe). Functions in the N-end rule pathway of protein degradation where it conjugates Leu, Phe and, less efficiently, Met from aminoacyl-tRNAs to the N-termini of proteins containing an N-terminal arginine or lysine. In Pseudomonas aeruginosa (strain LESB58), this protein is Leucyl/phenylalanyl-tRNA--protein transferase.